A 537-amino-acid chain; its full sequence is Tyrosine-protein kinase Fyn (537 aa).

A lipid anchor (N-myristoyl glycine) is attached at Gly2. S-palmitoyl cysteine attachment occurs at residues Cys3 and Cys6. Thr12 is modified (phosphothreonine; by PKC). Residues 14–35 are disordered; the sequence is LTEERDGSLNQSSGYRYGTDPT. Phosphoserine occurs at positions 21 and 26. The SH3 domain occupies 82–143; it reads TGVTLFVALY…PSNYVAPVDS (62 aa). The SH2 domain occupies 149-246; sequence WYFGKLGRKD…GLCCRLVVPC (98 aa). At Tyr185 the chain carries Phosphotyrosine. A Protein kinase domain is found at 271 to 524; that stretch reads LQLIKRLGNG…YLQGFLEDYF (254 aa). ATP-binding positions include 277–285 and Lys299; that span reads LGNGQFGEV. Asp390 functions as the Proton acceptor in the catalytic mechanism. Tyr420 is modified (phosphotyrosine; by autocatalysis). Tyr531 carries the post-translational modification Phosphotyrosine; by CSK.

Belongs to the protein kinase superfamily. Tyr protein kinase family. SRC subfamily. As to quaternary structure, interacts (via its SH3 domain) with PIK3R1 and PRMT8. Interacts with FYB1, PAG1, and SH2D1A. Interacts with CD79A (tyrosine-phosphorylated form); the interaction increases FYN activity. Interacts (via SH2 domain) with CSF1R (tyrosine phosphorylated). Interacts with TOM1L1 (phosphorylated form). Interacts with KDR (tyrosine phosphorylated). Interacts (via SH3 domain) with KLHL2 (via N-terminus). Interacts with SH2D1A and SLAMF1. Interacts with ITCH; the interaction phosphorylates ITCH and negatively regulates its activity. Interacts with FASLG. Interacts with RUNX3. Interacts with KIT. Interacts with EPHA8; possible downstream effector of EPHA8 in regulation of cell adhesion. Interacts with PTK2/FAK1; this interaction leads to PTK2/FAK1 phosphorylation and activation. Interacts with CAV1; this interaction couples integrins to the Ras-ERK pathway. Interacts with UNC119. Interacts (via SH2 domain) with PTPRH (phosphorylated form). Interacts with PTPRO (phosphorylated form). Interacts with PTPRB (phosphorylated form). Interacts with FYB2. Interacts with DSCAM. Interacts with SKAP1 and FYB1; this interaction promotes the phosphorylation of CLNK. Interacts with NEDD9; in the presence of PTK2. It depends on Mn(2+) as a cofactor. In terms of processing, autophosphorylated at Tyr-420. Phosphorylation on the C-terminal tail at Tyr-531 by CSK maintains the enzyme in an inactive state. PTPRC/CD45 dephosphorylates Tyr-531 leading to activation. Ultraviolet B (UVB) strongly increase phosphorylation at Thr-12 and kinase activity, and promotes translocation from the cytoplasm to the nucleus. Dephosphorylation at Tyr-420 by PTPN2 negatively regulates T-cell receptor signaling. Phosphorylated at tyrosine residues, which can be enhanced by NTN1. Palmitoylated. Palmitoylation at Cys-3 and Cys-6, probably by ZDHHC21, regulates subcellular location.

Its subcellular location is the cytoplasm. It is found in the nucleus. It localises to the cell membrane. The protein resides in the perikaryon. The enzyme catalyses L-tyrosyl-[protein] + ATP = O-phospho-L-tyrosyl-[protein] + ADP + H(+). With respect to regulation, inhibited by phosphorylation of Tyr-531 by leukocyte common antigen and activated by dephosphorylation of this site. Functionally, non-receptor tyrosine-protein kinase that plays a role in many biological processes including regulation of cell growth and survival, cell adhesion, integrin-mediated signaling, cytoskeletal remodeling, cell motility, immune response and axon guidance. Inactive FYN is phosphorylated on its C-terminal tail within the catalytic domain. Following activation by PKA, the protein subsequently associates with PTK2/FAK1, allowing PTK2/FAK1 phosphorylation, activation and targeting to focal adhesions. Involved in the regulation of cell adhesion and motility through phosphorylation of CTNNB1 (beta-catenin) and CTNND1 (delta-catenin). Regulates cytoskeletal remodeling by phosphorylating several proteins including the actin regulator WAS and the microtubule-associated proteins MAP2 and MAPT. Promotes cell survival by phosphorylating AGAP2/PIKE-A and preventing its apoptotic cleavage. Participates in signal transduction pathways that regulate the integrity of the glomerular slit diaphragm (an essential part of the glomerular filter of the kidney) by phosphorylating several slit diaphragm components including NPHS1, KIRREL1 and TRPC6. Plays a role in neural processes by phosphorylating DPYSL2, a multifunctional adapter protein within the central nervous system, ARHGAP32, a regulator for Rho family GTPases implicated in various neural functions, and SNCA, a small pre-synaptic protein. Involved in reelin signaling by mediating phosphorylation of DAB1 following reelin (RELN)-binding to its receptor. Participates in the downstream signaling pathways that lead to T-cell differentiation and proliferation following T-cell receptor (TCR) stimulation. Phosphorylates PTK2B/PYK2 in response to T-cell receptor activation. Also participates in negative feedback regulation of TCR signaling through phosphorylation of PAG1, thereby promoting interaction between PAG1 and CSK and recruitment of CSK to lipid rafts. CSK maintains LCK and FYN in an inactive form. Promotes CD28-induced phosphorylation of VAV1. In mast cells, phosphorylates CLNK after activation of immunoglobulin epsilon receptor signaling. Can also promote CD244-mediated NK cell activation. This is Tyrosine-protein kinase Fyn from Bos taurus (Bovine).